The sequence spans 869 residues: Dynamin-3 (869 aa).

The Dynamin-type G domain occupies 28–294 (LLELPQIAVV…LTNHIRDTLP (267 aa)). The G1 motif stretch occupies residues 38–45 (GGQSAGKS). 38–46 (GGQSAGKSS) contributes to the GTP binding site. Residues 64–66 (VTR) are G2 motif. The interval 136–139 (DLPG) is G3 motif. The G4 motif stretch occupies residues 205 to 208 (TKLD). 205–211 (TKLDLMD) serves as a coordination point for GTP. Position 231 is a phosphotyrosine (tyrosine 231). The segment at 235–238 (VNRS) is G5 motif. A GTP-binding site is contributed by 236–239 (NRSQ). Lysine 299 carries the post-translational modification N6-acetyllysine. In terms of domain architecture, PH spans 515–621 (QGTNLPPSRQ…ACDSQEDVDS (107 aa)). Position 603 is a phosphotyrosine (tyrosine 603). An N6-acetyllysine modification is found at lysine 604. The region spanning 659–750 (VETIRNLVDS…IIGDISTATV (92 aa)) is the GED domain. The disordered stretch occupies residues 747 to 869 (TATVSTPAPP…IRPLESSLLD (123 aa)). Phosphoserine is present on residues serine 769 and serine 773. Composition is skewed to pro residues over residues 797-822 (PAIPSPGPHSGAPPVPFRPGPLPPFP) and 832-855 (PQVPSRPTRAPPSVPSRRPPPSPT). Phosphoserine is present on serine 853.

The protein belongs to the TRAFAC class dynamin-like GTPase superfamily. Dynamin/Fzo/YdjA family.

The protein resides in the cytoplasm. Its subcellular location is the cytoskeleton. The catalysed reaction is GTP + H2O = GDP + phosphate + H(+). In terms of biological role, microtubule-associated force-producing protein involved in producing microtubule bundles and able to bind and hydrolyze GTP. Most probably involved in vesicular trafficking processes, in particular endocytosis. The sequence is that of Dynamin-3 (DNM3) from Homo sapiens (Human).